A 453-amino-acid chain; its full sequence is MINKIMKKYETIYALATAPYNSAIHVIRLSGPDAFEIINKICDKQITKEGYRIQNARIVDNDQIIDDVLLMKFVAPKSFTGEDSIEINCHGGLFVINKIMALLNKHGAHLARRGEFSKRSYINKKIDLNQATAIHDLIFAKNNLSHSASIKALSGEFSKDIKNIQQEIFRLIGLVEIAIDYPEYEDEKKELTEEFKNLTNIRQKLQRIVNKSLKLKQISEGIKIAIVGEPNAGKSSLLNALLNEQKAIVTNIPGTTRDTVEGQIVLNDELIINLIDTAGIRKSSDQIEQIGINKSFKTIDKSDLVIYLIDLNKYQNYDKTNIYKYLINKKKQFVLVGNKVDEVDPTLNTGEIQIKISAKNNDISDLIKYLEETSLAIFNDENKQDSIFQEEWQINLLQTALYNINLILNDPNQYHDLVIQHLNEANNSLLKVLSEYEDYNLIDEIFKNFCLGK.

Residues Arg28, Glu86, and Lys125 each contribute to the (6S)-5-formyl-5,6,7,8-tetrahydrofolate site. One can recognise a TrmE-type G domain in the interval 221-375 (GIKIAIVGEP…LIKYLEETSL (155 aa)). Asn231 is a K(+) binding site. Residues 231-236 (NAGKSS), 250-256 (TNIPGTT), and 276-279 (DTAG) contribute to the GTP site. Ser235 lines the Mg(2+) pocket. Positions 250, 252, and 255 each coordinate K(+). Residue Thr256 coordinates Mg(2+). Lys453 serves as a coordination point for (6S)-5-formyl-5,6,7,8-tetrahydrofolate.

It belongs to the TRAFAC class TrmE-Era-EngA-EngB-Septin-like GTPase superfamily. TrmE GTPase family. In terms of assembly, homodimer. Heterotetramer of two MnmE and two MnmG subunits. Requires K(+) as cofactor.

The protein localises to the cytoplasm. In terms of biological role, exhibits a very high intrinsic GTPase hydrolysis rate. Involved in the addition of a carboxymethylaminomethyl (cmnm) group at the wobble position (U34) of certain tRNAs, forming tRNA-cmnm(5)s(2)U34. The protein is tRNA modification GTPase MnmE of Mycoplasmoides gallisepticum (strain R(low / passage 15 / clone 2)) (Mycoplasma gallisepticum).